The sequence spans 317 residues: Melanocyte-stimulating hormone receptor (317 aa).

The Extracellular segment spans residues 1 to 37; the sequence is MAVQGSQRRLLGSLNSTPTAIPQLGLAANQTGAWCLE. An N-linked (GlcNAc...) asparagine glycan is attached at Asn-29. Residues 38-63 form a helical membrane-spanning segment; it reads VSIPDGLFLSLGLVSLVENVLVVATI. Over 64–72 the chain is Cytoplasmic; it reads AKNRNLHSP. A helical transmembrane segment spans residues 73–93; the sequence is MYCFICCLALSDLLVSGGNVL. The Extracellular segment spans residues 94–118; it reads ETAVILLLEAGALAARAAVVQQLDN. A helical membrane pass occupies residues 119–140; the sequence is VIDVITCSSMLSSLCFLGAIAV. The Cytoplasmic portion of the chain corresponds to 141 to 163; it reads DRYISIFYALRYHSIVTLPRARR. Residues 164-183 form a helical membrane-spanning segment; it reads AIAAIWVASVLFSTLFIAYY. Residues 184-191 are Extracellular-facing; sequence DHAAVLLC. A helical membrane pass occupies residues 192 to 211; that stretch reads LVVFFLAMLVLMAVLYVHML. The Cytoplasmic segment spans residues 212 to 240; the sequence is ARACQHAQGIARLHKRQRPVHQGFGLKGA. The helical transmembrane segment at 241–266 threads the bilayer; it reads VTLTILLGIFFLCWGPFFLHLTLIVL. The Extracellular segment spans residues 267-279; the sequence is CPQHPTCSCIFKN. Residues 280-300 traverse the membrane as a helical segment; it reads FNLFLALIICNAIIDPLIYAF. At 301–317 the chain is on the cytoplasmic side; that stretch reads RSQELRRTLKEVLTCSW. Cys-315 carries S-palmitoyl cysteine lipidation.

Belongs to the G-protein coupled receptor 1 family. As to quaternary structure, interacts with MGRN1, but does not undergo MGRN1-mediated ubiquitination; this interaction competes with GNAS-binding and thus inhibits agonist-induced cAMP production. Interacts with OPN3; the interaction results in a decrease in MC1R-mediated cAMP signaling and ultimately a decrease in melanin production in melanocytes.

It is found in the cell membrane. Its function is as follows. Receptor for MSH (alpha, beta and gamma) and ACTH. The activity of this receptor is mediated by G proteins which activate adenylate cyclase. Mediates melanogenesis, the production of eumelanin (black/brown) and phaeomelanin (red/yellow), via regulation of cAMP signaling in melanocytes. The polypeptide is Melanocyte-stimulating hormone receptor (MC1R) (Pongo pygmaeus (Bornean orangutan)).